The primary structure comprises 737 residues: Glycogen [starch] synthase, muscle (737 aa).

Serine 8 is subject to Phosphoserine; by AMPK and PKA. Phosphoserine is present on serine 11. Lysine 39 serves as a coordination point for UDP. UDP-alpha-D-glucose is bound by residues histidine 205 and arginine 211. Residues histidine 291, glutamate 292, glutamine 294, histidine 297, and lysine 301 each contribute to the alpha-D-glucose 6-phosphate site. Arginine 331 is a binding site for UDP. Arginine 331 contributes to the UDP-alpha-D-glucose binding site. Position 412 is a phosphoserine (serine 412). Histidine 501 is an alpha-D-glucose 6-phosphate binding site. UDP-alpha-D-glucose-binding residues include glutamate 510, tryptophan 512, and glycine 513. Threonine 515 provides a ligand contact to UDP. Alpha-D-glucose 6-phosphate is bound by residues arginine 582 and arginine 586. A disordered region spans residues 634–737 (YRYPRPASVP…PTSSLGEERN (104 aa)). Serine 641, serine 645, serine 649, and serine 652 each carry phosphoserine. The residue at position 653 (serine 653) is a Phosphoserine; by GSK3-alpha and GSK3-beta. Position 657 is a phosphoserine; by CK2 (serine 657). The segment covering 658–681 (EDEEDPRNGPLEEDGERYDEDEEA) has biased composition (acidic residues). Residues 682-695 (AKDRRNIRAPEWPR) show a composition bias toward basic and acidic residues. Serine 698 is subject to Phosphoserine. Polar residues predominate over residues 698-714 (SCTSSTSGSKRNSVDTA). Threonine 700 is modified (phosphothreonine). Serine 710 is subject to Phosphoserine. The span at 715-737 (TSSSLSTPSEPLSPTSSLGEERN) shows a compositional bias: low complexity. At threonine 721 the chain carries Phosphothreonine. A phosphoserine mark is found at serine 727 and serine 731.

Belongs to the glycosyltransferase 3 family. As to quaternary structure, part of the GYS1-GYG1 complex, a heterooctamer composed of a tetramer of GYS1 and 2 dimers of GYG1, where each GYS1 protomer binds to one GYG1 subunit (via GYG1 C-terminus); the GYS1 tetramer may dissociate from GYG1 dimers to continue glycogen polymerization on its own. Phosphorylation at Ser-8 by AMPK inactivates the enzyme activity. Primed phosphorylation at Ser-657 (site 5) by CSNK2A1 and CSNK2A2 is required for inhibitory phosphorylation at Ser-641 (site 3a), Ser-645 (site 3b), Ser-649 (site 3c) and Ser-653 (site 4) by GSK3A an GSK3B. Phosphorylated at Ser-641 by DYRK2, leading to inactivation. Phosphorylated at Ser-641 by PASK, leading to inactivation; phosphorylation by PASK is inhibited by glycogen. Dephosphorylation at Ser-641 and Ser-645 by PP1 activates the enzyme. Expressed in skeletal muscle and most other cell types where glycogen is present.

The enzyme catalyses [(1-&gt;4)-alpha-D-glucosyl](n) + UDP-alpha-D-glucose = [(1-&gt;4)-alpha-D-glucosyl](n+1) + UDP + H(+). The protein operates within glycan biosynthesis; glycogen biosynthesis. With respect to regulation, allosteric activation by glucose-6-phosphate. Phosphorylation reduces enzyme activity by constraining a tense conformation of the tetramer through inter-subunit interaction. Phosphorylation reduces the activity towards UDP-glucose. When in the non-phosphorylated state, glycogen synthase does not require glucose-6-phosphate as an allosteric activator; when phosphorylated it does. Functionally, glycogen synthase participates in the glycogen biosynthetic process along with glycogenin and glycogen branching enzyme. Extends the primer composed of a few glucose units formed by glycogenin by adding new glucose units to it. In this context, glycogen synthase transfers the glycosyl residue from UDP-Glc to the non-reducing end of alpha-1,4-glucan. The polypeptide is Glycogen [starch] synthase, muscle (Homo sapiens (Human)).